Reading from the N-terminus, the 574-residue chain is Septation ring formation regulator EzrA (574 aa).

The Extracellular segment spans residues 1–7 (MSSGIIL). A helical membrane pass occupies residues 8–26 (LLVAIVLLVIIAYVVGVVI). At 27–574 (RKRNDTLIAN…YEKTQERIRF (548 aa)) the chain is on the cytoplasmic side. 3 coiled-coil regions span residues 104-141 (VRAK…EEKN), 275-343 (LVSL…SAKY), and 473-525 (DIEA…VQKS).

It belongs to the EzrA family.

Its subcellular location is the cell membrane. Functionally, negative regulator of FtsZ ring formation; modulates the frequency and position of FtsZ ring formation. Inhibits FtsZ ring formation at polar sites. Interacts either with FtsZ or with one of its binding partners to promote depolymerization. The sequence is that of Septation ring formation regulator EzrA from Streptococcus agalactiae serotype III (strain NEM316).